The chain runs to 211 residues: ATP phosphoribosyltransferase (211 aa).

The protein belongs to the ATP phosphoribosyltransferase family. Short subfamily. Heteromultimer composed of HisG and HisZ subunits.

It localises to the cytoplasm. The enzyme catalyses 1-(5-phospho-beta-D-ribosyl)-ATP + diphosphate = 5-phospho-alpha-D-ribose 1-diphosphate + ATP. It participates in amino-acid biosynthesis; L-histidine biosynthesis; L-histidine from 5-phospho-alpha-D-ribose 1-diphosphate: step 1/9. Its function is as follows. Catalyzes the condensation of ATP and 5-phosphoribose 1-diphosphate to form N'-(5'-phosphoribosyl)-ATP (PR-ATP). Has a crucial role in the pathway because the rate of histidine biosynthesis seems to be controlled primarily by regulation of HisG enzymatic activity. This is ATP phosphoribosyltransferase from Sorangium cellulosum (strain So ce56) (Polyangium cellulosum (strain So ce56)).